The chain runs to 557 residues: Dihydroxy-acid dehydratase (557 aa).

Cys-50 contacts [2Fe-2S] cluster. Asp-82 is a Mg(2+) binding site. A [2Fe-2S] cluster-binding site is contributed by Cys-123. Asp-124 and Lys-125 together coordinate Mg(2+). Lys-125 carries the post-translational modification N6-carboxylysine. Cys-195 contributes to the [2Fe-2S] cluster binding site. Mg(2+) is bound at residue Glu-447. The Proton acceptor role is filled by Ser-473.

The protein belongs to the IlvD/Edd family. Homodimer. It depends on [2Fe-2S] cluster as a cofactor. Mg(2+) is required as a cofactor.

It carries out the reaction (2R)-2,3-dihydroxy-3-methylbutanoate = 3-methyl-2-oxobutanoate + H2O. The enzyme catalyses (2R,3R)-2,3-dihydroxy-3-methylpentanoate = (S)-3-methyl-2-oxopentanoate + H2O. Its pathway is amino-acid biosynthesis; L-isoleucine biosynthesis; L-isoleucine from 2-oxobutanoate: step 3/4. The protein operates within amino-acid biosynthesis; L-valine biosynthesis; L-valine from pyruvate: step 3/4. Functionally, functions in the biosynthesis of branched-chain amino acids. Catalyzes the dehydration of (2R,3R)-2,3-dihydroxy-3-methylpentanoate (2,3-dihydroxy-3-methylvalerate) into 2-oxo-3-methylpentanoate (2-oxo-3-methylvalerate) and of (2R)-2,3-dihydroxy-3-methylbutanoate (2,3-dihydroxyisovalerate) into 2-oxo-3-methylbutanoate (2-oxoisovalerate), the penultimate precursor to L-isoleucine and L-valine, respectively. This Herminiimonas arsenicoxydans protein is Dihydroxy-acid dehydratase.